Reading from the N-terminus, the 577-residue chain is Arginine--tRNA ligase (577 aa).

A 'HIGH' region motif is present at residues 132 to 142 (ANPTGPLHVGH).

The protein belongs to the class-I aminoacyl-tRNA synthetase family. As to quaternary structure, monomer.

It localises to the cytoplasm. The enzyme catalyses tRNA(Arg) + L-arginine + ATP = L-arginyl-tRNA(Arg) + AMP + diphosphate. This is Arginine--tRNA ligase from Herminiimonas arsenicoxydans.